The chain runs to 151 residues: UPF0208 membrane protein ESA_00924 (151 aa).

2 helical membrane-spanning segments follow: residues 46-65 and 69-91; these read FAIR…QIAL and LGPA…WWLG.

The protein belongs to the UPF0208 family.

The protein resides in the cell inner membrane. The sequence is that of UPF0208 membrane protein ESA_00924 from Cronobacter sakazakii (strain ATCC BAA-894) (Enterobacter sakazakii).